Here is an 874-residue protein sequence, read N- to C-terminus: Protein Son (874 aa).

3 disordered regions span residues methionine 1–aspartate 45, arginine 68–proline 98, and glutamate 120–leucine 368. Over residues glutamate 12–proline 24 the composition is skewed to polar residues. Residues serine 70–serine 89 show a composition bias toward low complexity. Composition is skewed to basic residues over residues lysine 128–threonine 147 and lysine 162–isoleucine 175. Basic and acidic residues-rich tracts occupy residues arginine 176–phenylalanine 219 and serine 226–arginine 277. Residues threonine 705 to aspartate 751 enclose the G-patch domain. One can recognise a DRBM domain in the interval histidine 800–isoleucine 870.

Expressed in ovarian nurse cells (at protein level).

The protein resides in the nucleus. RNA-binding protein that protects nascent transcripts containing intronic transposable sequences, known as INE-1, from being degraded by DIP1. Modulates DIP1 activity by repressing its sumoylation levels. This ensures that intronic sequences will be degradated only after splicing. In the ovaries, regulates germline stem cells (GSCs) self-renewal by repressing the expression of the GSC differentiation-promoting factor Rga. This Drosophila melanogaster (Fruit fly) protein is Protein Son.